Reading from the N-terminus, the 332-residue chain is Nuclear hormone receptor family member nhr-9 (332 aa).

The segment at residues 11–85 (ERRCAICSKL…MGMRIVTNQY (75 aa)) is a DNA-binding region (nuclear receptor). 2 consecutive NR C4-type zinc fingers follow at residues 14-34 (CAIC…CNAC) and 50-73 (CINN…YNKC). Residues 101–332 (DRSNKLMNFQ…KRLCAELLGA (232 aa)) form the NR LBD domain.

This sequence belongs to the nuclear hormone receptor family.

The protein localises to the nucleus. Orphan nuclear receptor. This is Nuclear hormone receptor family member nhr-9 (nhr-9) from Caenorhabditis elegans.